Reading from the N-terminus, the 1087-residue chain is Exportin-7 (1087 aa).

A2 carries the N-acetylalanine modification. Positions 30–96 constitute an Importin N-terminal domain; that stretch reads AEKALVEFTN…RNYVLNYLAT (67 aa). S570 carries the phosphoserine modification.

It belongs to the exportin family. As to quaternary structure, binds to nucleoporins. Found in a complex with XPO7, EIF4A1, ARHGAP1, VPS26A, VPS29, VPS35 and SFN. Interacts with ARHGAP1 and SFN. Interacts with Ran and cargo proteins in a GTP-dependent manner. As to expression, highly expressed in testis and spleen, moderate in kidney and liver and low in heart, brain, lung and skeletal muscle.

Its subcellular location is the cytoplasm. The protein resides in the nucleus. Its function is as follows. Mediates the nuclear export of proteins (cargos) with broad substrate specificity. In the nucleus binds cooperatively to its cargo and to the GTPase Ran in its active GTP-bound form. Docking of this trimeric complex to the nuclear pore complex (NPC) is mediated through binding to nucleoporins. Upon transit of a nuclear export complex into the cytoplasm, disassembling of the complex and hydrolysis of Ran-GTP to Ran-GDP (induced by RANBP1 and RANGAP1, respectively) cause release of the cargo from the export receptor. XPO7 then return to the nuclear compartment and mediate another round of transport. The directionality of nuclear export is thought to be conferred by an asymmetric distribution of the GTP- and GDP-bound forms of Ran between the cytoplasm and nucleus. In Mus musculus (Mouse), this protein is Exportin-7 (Xpo7).